The primary structure comprises 157 residues: S-ribosylhomocysteine lyase (157 aa).

His-54, His-58, and Cys-124 together coordinate Fe cation.

Belongs to the LuxS family. Homodimer. Requires Fe cation as cofactor.

It carries out the reaction S-(5-deoxy-D-ribos-5-yl)-L-homocysteine = (S)-4,5-dihydroxypentane-2,3-dione + L-homocysteine. Involved in the synthesis of autoinducer 2 (AI-2) which is secreted by bacteria and is used to communicate both the cell density and the metabolic potential of the environment. The regulation of gene expression in response to changes in cell density is called quorum sensing. Catalyzes the transformation of S-ribosylhomocysteine (RHC) to homocysteine (HC) and 4,5-dihydroxy-2,3-pentadione (DPD). The sequence is that of S-ribosylhomocysteine lyase from Lactobacillus helveticus (strain DPC 4571).